We begin with the raw amino-acid sequence, 185 residues long: Orotate phosphoribosyltransferase (185 aa).

5-phospho-alpha-D-ribose 1-diphosphate is bound by residues Arg99, Lys100, Lys103, and 125–133 (EDVTTTGGS). Orotate is bound by residues Thr129 and Arg157.

The protein belongs to the purine/pyrimidine phosphoribosyltransferase family. PyrE subfamily. Homodimer. The cofactor is Mg(2+).

The enzyme catalyses orotidine 5'-phosphate + diphosphate = orotate + 5-phospho-alpha-D-ribose 1-diphosphate. It functions in the pathway pyrimidine metabolism; UMP biosynthesis via de novo pathway; UMP from orotate: step 1/2. In terms of biological role, catalyzes the transfer of a ribosyl phosphate group from 5-phosphoribose 1-diphosphate to orotate, leading to the formation of orotidine monophosphate (OMP). The chain is Orotate phosphoribosyltransferase from Methanococcus maripaludis (strain DSM 14266 / JCM 13030 / NBRC 101832 / S2 / LL).